Reading from the N-terminus, the 199-residue chain is Recombination protein RecR (199 aa).

The C4-type zinc finger occupies 57 to 72 (CERCNNLSEAPLCAVC). The 95-residue stretch at 80–174 (SILCVVESPA…TISRIARGVP (95 aa)) folds into the Toprim domain.

The protein belongs to the RecR family.

Its function is as follows. May play a role in DNA repair. It seems to be involved in an RecBC-independent recombinational process of DNA repair. It may act with RecF and RecO. The polypeptide is Recombination protein RecR (Acidithiobacillus ferrooxidans (strain ATCC 23270 / DSM 14882 / CIP 104768 / NCIMB 8455) (Ferrobacillus ferrooxidans (strain ATCC 23270))).